The following is a 463-amino-acid chain: Putative ankyrin repeat protein R579 (463 aa).

8 ANK repeats span residues 124–154 (LKTD…KCTI), 156–181 (SITR…SENI), 242–271 (KEKN…QFNP), 273–299 (IYLW…DYRP), 300–328 (HIDR…VSQE), 329–355 (NINE…MGAD), 356–385 (INYK…DITT), and 387–416 (GSND…TITL).

This is Putative ankyrin repeat protein R579 from Acanthamoeba polyphaga (Amoeba).